A 478-amino-acid polypeptide reads, in one-letter code: NAD(+) hydrolase ThsA (478 aa).

The region spanning 1–287 (MDKKVLIKRF…SIRKKYLRKT (287 aa)) is the Deacetylase sirtuin-type domain. 3 residues coordinate NAD(+): Ala-19, Asp-110, and His-148. The active-site Proton acceptor is His-148. The segment at 288–478 (IFISGSAVDY…VSLINSIQED (191 aa)) is SLOG (STALD) domain. 7 residues coordinate 3'cADPR: Gly-292, Ser-293, Leu-330, Arg-373, Lys-390, Gly-401, and Glu-405.

It belongs to the soluble Thoeris ThsA family. As to quaternary structure, homotetramer in solution.

It catalyses the reaction NAD(+) + H2O = ADP-D-ribose + nicotinamide + H(+). With respect to regulation, activated by 3'cADPR. Functionally, NAD(+) hydrolyzing component (NADase) of the Thoeris antiviral defense system, composed of ThsA and ThsB (maybe AS248_15445). Activated by 3' cyclic ADP-D-ribose (3'cADPR) but not its isomers 2'cADPR, cADPR and very weakly by ADPR; binds 3'cADPR better than 2'cADPR. Upon activation binds and hydrolyzes NAD(+), leading to cell death and inhibition of phage replication. The sequence is that of NAD(+) hydrolase ThsA from Enterococcus faecium (Streptococcus faecium).